The following is a 446-amino-acid chain: Glycogen synthase (446 aa).

Arginine 15 contacts ADP-alpha-D-glucose.

The protein belongs to the glycosyltransferase 1 family. Bacterial/plant glycogen synthase subfamily.

The catalysed reaction is [(1-&gt;4)-alpha-D-glucosyl](n) + ADP-alpha-D-glucose = [(1-&gt;4)-alpha-D-glucosyl](n+1) + ADP + H(+). Its pathway is glycan biosynthesis; glycogen biosynthesis. Synthesizes alpha-1,4-glucan chains using ADP-glucose. The polypeptide is Glycogen synthase (Deinococcus deserti (strain DSM 17065 / CIP 109153 / LMG 22923 / VCD115)).